Reading from the N-terminus, the 357-residue chain is Glucose-6-phosphatase catalytic subunit 1 (357 aa).

The Lumenal segment spans residues 1–28 (MEKGMNVLHDFGIQSTHYLQVNYQDSQD). A helical membrane pass occupies residues 29–49 (WFILVSVIADLRNAFYVLFPI). The Cytoplasmic segment spans residues 50-60 (WFHLREAVGIK). Residues 61–81 (LLWVAVIGDWLNLVFKWILFG) traverse the membrane as a helical segment. At 82–117 (QRPYWWVMDTDYYSNASVPLIKQFPVTCETGPGSPS) the chain is on the lumenal side. Arg-83 contributes to the substrate binding site. Asn-96 carries an N-linked (GlcNAc...) asparagine glycan. Residues 118–138 (GHAMGTAGVYYVMVTSTLSMF) traverse the membrane as a helical segment. The active-site Proton donor is His-119. At 139–147 (RGKKKPTYR) the chain is on the cytoplasmic side. A helical transmembrane segment spans residues 148–168 (FRCLNVILWLGFWAVQLNVCL). The Lumenal segment spans residues 169 to 170 (SR). Residue Arg-170 coordinates substrate. A helical transmembrane segment spans residues 171–191 (IYLAAHFPHQVVAGVLSGIAV). The active-site Nucleophile is His-176. Over 192–209 (AETFRHIQSIYNASLKKY) the chain is Cytoplasmic. The chain crosses the membrane as a helical span at residues 210–230 (FFITFFLLSFAIGFYLLLKGL). The Lumenal portion of the chain corresponds to 231–254 (GVDLLWTLEKARRWCERPEWVHID). Residues 255–275 (TTPFASLLKNVGTLFGLGLAL) form a helical membrane-spanning segment. The Cytoplasmic portion of the chain corresponds to 276 to 291 (NSSMYRESCKGTLSKW). Residues 292–312 (FPFRLSCIVVSLILLHLFDSL) form a helical membrane-spanning segment. Residues 313-320 (KPPSQIEL) lie on the Lumenal side of the membrane. Residues 321–341 (IFYVLSFCKSAAVPLASVSLI) traverse the membrane as a helical segment. The Cytoplasmic portion of the chain corresponds to 342–357 (PYCLARVLGQPDKKSL). Positions 354-357 (KKSL) match the Prevents secretion from ER motif.

The protein belongs to the glucose-6-phosphatase family.

It localises to the endoplasmic reticulum membrane. The catalysed reaction is D-glucose 6-phosphate + H2O = D-glucose + phosphate. It functions in the pathway carbohydrate biosynthesis; gluconeogenesis. Its function is as follows. Hydrolyzes glucose-6-phosphate to glucose in the endoplasmic reticulum. Forms with the glucose-6-phosphate transporter (SLC37A4/G6PT) the complex responsible for glucose production in the terminal step of glycogenolysis and gluconeogenesis. Hence, it is the key enzyme in homeostatic regulation of blood glucose levels. The sequence is that of Glucose-6-phosphatase catalytic subunit 1 (G6PC1) from Felis catus (Cat).